Here is a 1025-residue protein sequence, read N- to C-terminus: Glycine dehydrogenase (decarboxylating), mitochondrial (1025 aa).

The N-terminal 35 residues, 1-35 (MQLCARAWGLRLGRGAGGGHRLARGTGLSWAQRSR), are a transit peptide targeting the mitochondrion. The interval 16 to 51 (AGGGHRLARGTGLSWAQRSRDSSGGGGGGGGGDRGA) is disordered. Residues 38–50 (SGGGGGGGGGDRG) are compositionally biased toward gly residues. N6-acetyllysine occurs at positions 452, 519, 653, and 669. Lysine 759 is subject to N6-(pyridoxal phosphate)lysine.

This sequence belongs to the GcvP family. As to quaternary structure, interacts with GCSH. Homodimer. The glycine cleavage system is composed of four proteins: P (GLDC), T (GCST), L (DLD) and H (GCSH). The cofactor is pyridoxal 5'-phosphate.

It is found in the mitochondrion. The enzyme catalyses N(6)-[(R)-lipoyl]-L-lysyl-[glycine-cleavage complex H protein] + glycine + H(+) = N(6)-[(R)-S(8)-aminomethyldihydrolipoyl]-L-lysyl-[glycine-cleavage complex H protein] + CO2. With respect to regulation, stimulated by lipoic acid. Inhibited in presence of methylamine. Its function is as follows. The glycine cleavage system catalyzes the degradation of glycine. The P protein (GLDC) binds the alpha-amino group of glycine through its pyridoxal phosphate cofactor; CO(2) is released and the remaining methylamine moiety is then transferred to the lipoamide cofactor of the H protein (GCSH). The chain is Glycine dehydrogenase (decarboxylating), mitochondrial from Mus musculus (Mouse).